The sequence spans 238 residues: tRNA (guanine-N(7)-)-methyltransferase (238 aa).

4 residues coordinate S-adenosyl-L-methionine: E68, E93, D120, and D143. D143 is an active-site residue. Residues K147, D179, and 216-219 (TKFE) each bind substrate.

This sequence belongs to the class I-like SAM-binding methyltransferase superfamily. TrmB family.

It catalyses the reaction guanosine(46) in tRNA + S-adenosyl-L-methionine = N(7)-methylguanosine(46) in tRNA + S-adenosyl-L-homocysteine. Its pathway is tRNA modification; N(7)-methylguanine-tRNA biosynthesis. Its function is as follows. Catalyzes the formation of N(7)-methylguanine at position 46 (m7G46) in tRNA. The protein is tRNA (guanine-N(7)-)-methyltransferase of Shewanella baltica (strain OS195).